The following is a 576-amino-acid chain: NADH-ubiquinone oxidoreductase chain 5 (576 aa).

16 helical membrane-spanning segments follow: residues 6–26 (ISFYFLLSISLSLFLISLKFL), 46–66 (IVMTFLFDWMSLMFMSFVLLI), 88–108 (ILLVLMFVMSMMMLIISPNLI), 109–129 (SILLGWDGLGLVSYCLVIYFQ), 149–169 (VALLLAIAWMLNYGSWNYIFY), 179–199 (MMIIGGLVMLAAMTKSAQIPF), 211–231 (TPVSALVHSSTLVTAGLYLLI), 240–260 (WWMGQFMLLISGLTMFMAGLG), 270–289 (IIALSTLSQLGLMMSILSMG), 294–316 (AFFHLLTHALFKALLFMCAGSII), 339–359 (CSCFNVANLALCGMPFLAGFY), 363–383 (LILEMVSLSYVNVFSFFLFFF), 423–443 (IFFLMIMAVIGGSMLSWLMFL), 459–479 (LFVCILGGLIGYLLSNVSLFF), 492–512 (FAGSMWFMPVVSTIGVINYPL), and 556–576 (IYLLSYMLWFIVLLMLVVLVN).

It belongs to the complex I subunit 5 family.

It is found in the mitochondrion inner membrane. It catalyses the reaction a ubiquinone + NADH + 5 H(+)(in) = a ubiquinol + NAD(+) + 4 H(+)(out). Functionally, core subunit of the mitochondrial membrane respiratory chain NADH dehydrogenase (Complex I) that is believed to belong to the minimal assembly required for catalysis. Complex I functions in the transfer of electrons from NADH to the respiratory chain. The immediate electron acceptor for the enzyme is believed to be ubiquinone. The polypeptide is NADH-ubiquinone oxidoreductase chain 5 (ND5) (Anopheles quadrimaculatus (Common malaria mosquito)).